Here is a 343-residue protein sequence, read N- to C-terminus: Selenide, water dikinase (343 aa).

Sec16 is a catalytic residue. A non-standard amino acid (selenocysteine) is located at residue Sec16. ATP contacts are provided by residues Lys19 and 46 to 48 (GAE). Asp49 provides a ligand contact to Mg(2+). Residues Asp66, Asp89, and 137-139 (GHT) contribute to the ATP site. Residue Asp89 coordinates Mg(2+). Asp225 contributes to the Mg(2+) binding site.

The protein belongs to the selenophosphate synthase 1 family. Class I subfamily. As to quaternary structure, homodimer. It depends on Mg(2+) as a cofactor.

The catalysed reaction is hydrogenselenide + ATP + H2O = selenophosphate + AMP + phosphate + 2 H(+). Functionally, synthesizes selenophosphate from selenide and ATP. The sequence is that of Selenide, water dikinase from Geobacter sp. (strain M21).